The sequence spans 428 residues: Histidine--tRNA ligase (428 aa).

It belongs to the class-II aminoacyl-tRNA synthetase family. Homodimer.

Its subcellular location is the cytoplasm. It carries out the reaction tRNA(His) + L-histidine + ATP = L-histidyl-tRNA(His) + AMP + diphosphate + H(+). The sequence is that of Histidine--tRNA ligase from Lactobacillus gasseri (strain ATCC 33323 / DSM 20243 / BCRC 14619 / CIP 102991 / JCM 1131 / KCTC 3163 / NCIMB 11718 / NCTC 13722 / AM63).